The sequence spans 309 residues: 2-phosphoglycerate kinase (309 aa).

The ATP-cone domain occupies 5 to 92 (NDIIVRGKSY…LWRMVLGRRP (88 aa)).

The protein belongs to the 2-phosphoglycerate kinase family. A divalent metal cation is required as a cofactor.

It catalyses the reaction (2R)-2-phosphoglycerate + ATP = (2R)-2,3-bisphosphoglycerate + ADP + H(+). Its pathway is thermoadapter biosynthesis; cyclic 2,3-diphosphoglycerate biosynthesis; cyclic 2,3-diphosphoglycerate from 2-phospho-D-glycerate: step 1/2. In terms of biological role, catalyzes the phosphorylation of 2-phosphoglycerate to 2,3-diphosphoglycerate. Involved in the biosynthesis of cyclic 2,3-bisphosphoglycerate, a thermoprotectant. The protein is 2-phosphoglycerate kinase of Methanocaldococcus jannaschii (strain ATCC 43067 / DSM 2661 / JAL-1 / JCM 10045 / NBRC 100440) (Methanococcus jannaschii).